Reading from the N-terminus, the 231-residue chain is MSLADTIRSSLVPIHREGYRFIAAFGIGSVILGLLWEPLFWIGLLLTAWCAYFFRDPQRITPVDDRLVIAPADGIVSSVGPALPPPELGLSGEFTRVSVFMNVFSCHINRAPVRGRISLIEHRPGKFLNADLDKASMENERNSLIIESPYGPVAVVQIAGLIARRIVCWAEAPGEISVGERFGLIRFGSRVDVYLPREARPRVAVGQVSVGGETIIAEFGSNAPPPLVRVS.

Ser189 serves as the catalytic Schiff-base intermediate with substrate; via pyruvic acid. Ser189 is modified (pyruvic acid (Ser); by autocatalysis).

The protein belongs to the phosphatidylserine decarboxylase family. PSD-A subfamily. In terms of assembly, heterodimer of a large membrane-associated beta subunit and a small pyruvoyl-containing alpha subunit. Pyruvate is required as a cofactor. Is synthesized initially as an inactive proenzyme. Formation of the active enzyme involves a self-maturation process in which the active site pyruvoyl group is generated from an internal serine residue via an autocatalytic post-translational modification. Two non-identical subunits are generated from the proenzyme in this reaction, and the pyruvate is formed at the N-terminus of the alpha chain, which is derived from the carboxyl end of the proenzyme. The post-translation cleavage follows an unusual pathway, termed non-hydrolytic serinolysis, in which the side chain hydroxyl group of the serine supplies its oxygen atom to form the C-terminus of the beta chain, while the remainder of the serine residue undergoes an oxidative deamination to produce ammonia and the pyruvoyl prosthetic group on the alpha chain.

It is found in the cell membrane. The enzyme catalyses a 1,2-diacyl-sn-glycero-3-phospho-L-serine + H(+) = a 1,2-diacyl-sn-glycero-3-phosphoethanolamine + CO2. It functions in the pathway phospholipid metabolism; phosphatidylethanolamine biosynthesis; phosphatidylethanolamine from CDP-diacylglycerol: step 2/2. Catalyzes the formation of phosphatidylethanolamine (PtdEtn) from phosphatidylserine (PtdSer). The polypeptide is Phosphatidylserine decarboxylase proenzyme (Chelativorans sp. (strain BNC1)).